The following is a 406-amino-acid chain: Tryptophan synthase beta chain (406 aa).

K99 carries the N6-(pyridoxal phosphate)lysine modification.

It belongs to the TrpB family. In terms of assembly, tetramer of two alpha and two beta chains. Requires pyridoxal 5'-phosphate as cofactor.

It catalyses the reaction (1S,2R)-1-C-(indol-3-yl)glycerol 3-phosphate + L-serine = D-glyceraldehyde 3-phosphate + L-tryptophan + H2O. It participates in amino-acid biosynthesis; L-tryptophan biosynthesis; L-tryptophan from chorismate: step 5/5. Its function is as follows. The beta subunit is responsible for the synthesis of L-tryptophan from indole and L-serine. In Rhizobium meliloti (strain 1021) (Ensifer meliloti), this protein is Tryptophan synthase beta chain.